The chain runs to 144 residues: L-fucose mutarotase (144 aa).

His22 functions as the Proton donor in the catalytic mechanism. Substrate is bound by residues Asp30, Arg109, and 131 to 133 (YGN).

Belongs to the RbsD / FucU family. FucU mutarotase subfamily. Homodecamer.

The protein resides in the cytoplasm. It carries out the reaction alpha-L-fucose = beta-L-fucose. Its pathway is carbohydrate metabolism; L-fucose metabolism. Involved in the anomeric conversion of L-fucose. The sequence is that of L-fucose mutarotase from Haemophilus influenzae (strain PittGG).